The chain runs to 209 residues: Imidazoleglycerol-phosphate dehydratase (209 aa).

This sequence belongs to the imidazoleglycerol-phosphate dehydratase family.

Its subcellular location is the cytoplasm. The enzyme catalyses D-erythro-1-(imidazol-4-yl)glycerol 3-phosphate = 3-(imidazol-4-yl)-2-oxopropyl phosphate + H2O. Its pathway is amino-acid biosynthesis; L-histidine biosynthesis; L-histidine from 5-phospho-alpha-D-ribose 1-diphosphate: step 6/9. The sequence is that of Imidazoleglycerol-phosphate dehydratase from Paracidovorax citrulli (strain AAC00-1) (Acidovorax citrulli).